A 910-amino-acid chain; its full sequence is Protein translocase subunit SecA (910 aa).

Residues Gln-87, 105 to 109 (GEGKT), and Asp-501 contribute to the ATP site. Positions 894, 896, 905, and 906 each coordinate Zn(2+).

Belongs to the SecA family. As to quaternary structure, monomer and homodimer. Part of the essential Sec protein translocation apparatus which comprises SecA, SecYEG and auxiliary proteins SecDF-YajC and YidC. It depends on Zn(2+) as a cofactor.

It localises to the cell inner membrane. The protein localises to the cytoplasm. It catalyses the reaction ATP + H2O + cellular proteinSide 1 = ADP + phosphate + cellular proteinSide 2.. Functionally, part of the Sec protein translocase complex. Interacts with the SecYEG preprotein conducting channel. Has a central role in coupling the hydrolysis of ATP to the transfer of proteins into and across the cell membrane, serving both as a receptor for the preprotein-SecB complex and as an ATP-driven molecular motor driving the stepwise translocation of polypeptide chains across the membrane. The sequence is that of Protein translocase subunit SecA from Acidiphilium cryptum (strain JF-5).